Reading from the N-terminus, the 488-residue chain is Galactose-1-phosphate uridylyltransferase (488 aa).

Belongs to the galactose-1-phosphate uridylyltransferase type 2 family.

It is found in the cytoplasm. The catalysed reaction is alpha-D-galactose 1-phosphate + UDP-alpha-D-glucose = alpha-D-glucose 1-phosphate + UDP-alpha-D-galactose. Its pathway is carbohydrate metabolism; galactose metabolism. In Lactobacillus helveticus (Lactobacillus suntoryeus), this protein is Galactose-1-phosphate uridylyltransferase (galT).